Consider the following 161-residue polypeptide: Small ribosomal subunit protein uS9 (161 aa).

The span at 1–21 shows a compositional bias: polar residues; the sequence is MATLQSLADLNRANTQTSNPE. Residues 1-25 are disordered; that stretch reads MATLQSLADLNRANTQTSNPENEAP.

This sequence belongs to the universal ribosomal protein uS9 family.

The sequence is that of Small ribosomal subunit protein uS9 from Methylorubrum populi (strain ATCC BAA-705 / NCIMB 13946 / BJ001) (Methylobacterium populi).